The chain runs to 145 residues: Large ribosomal subunit protein uL16 (145 aa).

It belongs to the universal ribosomal protein uL16 family. In terms of assembly, part of the 50S ribosomal subunit.

Functionally, binds 23S rRNA and is also seen to make contacts with the A and possibly P site tRNAs. The sequence is that of Large ribosomal subunit protein uL16 from Herpetosiphon aurantiacus (strain ATCC 23779 / DSM 785 / 114-95).